We begin with the raw amino-acid sequence, 511 residues long: Maturase K (511 aa).

Belongs to the intron maturase 2 family. MatK subfamily.

The protein resides in the plastid. It localises to the chloroplast. Usually encoded in the trnK tRNA gene intron. Probably assists in splicing its own and other chloroplast group II introns. This chain is Maturase K, found in Diplacus aurantiacus (Orange bush monkey flower).